The sequence spans 452 residues: Ribosomal protein uS12 methylthiotransferase RimO (452 aa).

The region spanning Gly3–Pro118 is the MTTase N-terminal domain. Residues Cys12, Cys48, Cys77, Cys149, Cys153, and Cys156 each coordinate [4Fe-4S] cluster. A Radical SAM core domain is found at Leu135–Arg382. The TRAM domain maps to Ala384–Thr452.

Belongs to the methylthiotransferase family. RimO subfamily. [4Fe-4S] cluster is required as a cofactor.

The protein localises to the cytoplasm. The catalysed reaction is L-aspartate(89)-[ribosomal protein uS12]-hydrogen + (sulfur carrier)-SH + AH2 + 2 S-adenosyl-L-methionine = 3-methylsulfanyl-L-aspartate(89)-[ribosomal protein uS12]-hydrogen + (sulfur carrier)-H + 5'-deoxyadenosine + L-methionine + A + S-adenosyl-L-homocysteine + 2 H(+). In terms of biological role, catalyzes the methylthiolation of an aspartic acid residue of ribosomal protein uS12. In Polynucleobacter necessarius subsp. necessarius (strain STIR1), this protein is Ribosomal protein uS12 methylthiotransferase RimO.